The chain runs to 290 residues: ATP synthase gamma chain (290 aa).

Belongs to the ATPase gamma chain family. In terms of assembly, F-type ATPases have 2 components, CF(1) - the catalytic core - and CF(0) - the membrane proton channel. CF(1) has five subunits: alpha(3), beta(3), gamma(1), delta(1), epsilon(1). CF(0) has three main subunits: a, b and c.

It is found in the cell inner membrane. Functionally, produces ATP from ADP in the presence of a proton gradient across the membrane. The gamma chain is believed to be important in regulating ATPase activity and the flow of protons through the CF(0) complex. This Dictyoglomus turgidum (strain DSM 6724 / Z-1310) protein is ATP synthase gamma chain.